The chain runs to 60 residues: Conotoxin VnMRCL-012 (60 aa).

The signal sequence occupies residues 1–22 (MRCLPVFVILLLLIASAPGVDA). A propeptide spanning residues 23–50 (QPKTKYDVPLASRHDFAKKTPKRLSKPR) is cleaved from the precursor.

Belongs to the conotoxin T superfamily. Post-translationally, contains 2 disulfide bonds that can be either 'C1-C3, C2-C4' or 'C1-C4, C2-C3', since these disulfide connectivities have been observed for conotoxins with cysteine framework V (for examples, see AC P0DQQ7 and AC P81755). Expressed by the venom duct.

It is found in the secreted. This Conus ventricosus (Mediterranean cone) protein is Conotoxin VnMRCL-012.